We begin with the raw amino-acid sequence, 147 residues long: uncharacterized protein (147 aa).

The interval 30-102 (GRCEQVALSS…TPPTRPESIF (73 aa)) is disordered. Residues 62–71 (RPSTGETFVQ) are compositionally biased toward polar residues.

This is an uncharacterized protein from Homo sapiens (Human).